Consider the following 318-residue polypeptide: CRISPR-associated endonuclease Cas1 1 (318 aa).

Mn(2+) is bound by residues Glu-160, His-225, and Glu-240.

The protein belongs to the CRISPR-associated endonuclease Cas1 family. In terms of assembly, homodimer, forms a heterotetramer with a Cas2 homodimer. Mg(2+) serves as cofactor. Mn(2+) is required as a cofactor.

CRISPR (clustered regularly interspaced short palindromic repeat), is an adaptive immune system that provides protection against mobile genetic elements (viruses, transposable elements and conjugative plasmids). CRISPR clusters contain spacers, sequences complementary to antecedent mobile elements, and target invading nucleic acids. CRISPR clusters are transcribed and processed into CRISPR RNA (crRNA). Acts as a dsDNA endonuclease. Involved in the integration of spacer DNA into the CRISPR cassette. This Thermodesulfovibrio yellowstonii (strain ATCC 51303 / DSM 11347 / YP87) protein is CRISPR-associated endonuclease Cas1 1.